The following is a 459-amino-acid chain: Glycosyl hydrolase family 109 protein (459 aa).

A signal peptide (tat-type signal) is located at residues 1–31; sequence MHNIHRRHFLKAAGAVTAGLITANITASTHA. Residues 64-65, aspartate 86, 135-138, 155-156, and asparagine 184 contribute to the NAD(+) site; these read ER, WEWH, and EV. Residues tyrosine 213, arginine 232, 244–247, and tyrosine 326 each bind substrate; that span reads YPTH. An NAD(+)-binding site is contributed by tyrosine 244.

Belongs to the Gfo/Idh/MocA family. Glycosyl hydrolase 109 subfamily. Requires NAD(+) as cofactor. In terms of processing, predicted to be exported by the Tat system. The position of the signal peptide cleavage has not been experimentally proven.

Glycosidase. The protein is Glycosyl hydrolase family 109 protein of Shewanella putrefaciens (strain CN-32 / ATCC BAA-453).